The following is a 205-amino-acid chain: Octanoyltransferase (205 aa).

Residues 30 to 205 (ERTADEIWLL…QALRARLGYA (176 aa)) form the BPL/LPL catalytic domain. Residues 69 to 76 (RGGQVTYH), 136 to 138 (SLG), and 149 to 151 (GLA) each bind substrate. C167 serves as the catalytic Acyl-thioester intermediate.

This sequence belongs to the LipB family.

The protein resides in the cytoplasm. It catalyses the reaction octanoyl-[ACP] + L-lysyl-[protein] = N(6)-octanoyl-L-lysyl-[protein] + holo-[ACP] + H(+). Its pathway is protein modification; protein lipoylation via endogenous pathway; protein N(6)-(lipoyl)lysine from octanoyl-[acyl-carrier-protein]: step 1/2. Functionally, catalyzes the transfer of endogenously produced octanoic acid from octanoyl-acyl-carrier-protein onto the lipoyl domains of lipoate-dependent enzymes. Lipoyl-ACP can also act as a substrate although octanoyl-ACP is likely to be the physiological substrate. In Ectopseudomonas mendocina (strain ymp) (Pseudomonas mendocina), this protein is Octanoyltransferase.